The sequence spans 279 residues: Pantothenate synthetase (279 aa).

31 to 38 is a binding site for ATP; the sequence is MGNLHGGH. Histidine 38 (proton donor) is an active-site residue. Glutamine 62 serves as a coordination point for (R)-pantoate. Glutamine 62 lines the beta-alanine pocket. Position 150 to 153 (150 to 153) interacts with ATP; that stretch reads GRKD. Glutamine 156 contacts (R)-pantoate. ATP contacts are provided by residues valine 179 and 187–190; that span reads KSSR.

The protein belongs to the pantothenate synthetase family. In terms of assembly, homodimer.

It is found in the cytoplasm. The catalysed reaction is (R)-pantoate + beta-alanine + ATP = (R)-pantothenate + AMP + diphosphate + H(+). It functions in the pathway cofactor biosynthesis; (R)-pantothenate biosynthesis; (R)-pantothenate from (R)-pantoate and beta-alanine: step 1/1. Catalyzes the condensation of pantoate with beta-alanine in an ATP-dependent reaction via a pantoyl-adenylate intermediate. This is Pantothenate synthetase from Stenotrophomonas maltophilia (strain R551-3).